The following is a 60-amino-acid chain: Large ribosomal subunit protein bL32 (60 aa).

Positions 1-16 (MAVPKRKTTPSKRGMR) are enriched in basic residues. The tract at residues 1–60 (MAVPKRKTTPSKRGMRRSADALKQPAYVENPDSGELHRPHHVDLKSGMYRGKQILKPKGE) is disordered. The span at 34 to 44 (GELHRPHHVDL) shows a compositional bias: basic and acidic residues.

Belongs to the bacterial ribosomal protein bL32 family.

This Parvibaculum lavamentivorans (strain DS-1 / DSM 13023 / NCIMB 13966) protein is Large ribosomal subunit protein bL32.